A 378-amino-acid polypeptide reads, in one-letter code: S-adenosylmethionine synthase (378 aa).

His-15 provides a ligand contact to ATP. Asp-17 contributes to the Mg(2+) binding site. Residue Glu-43 participates in K(+) binding. Glu-56 and Gln-99 together coordinate L-methionine. Residues 99 to 109 form a flexible loop region; it reads QSPDINQGINR. Residues 164-166, 230-231, Asp-239, 245-246, Ala-262, and Lys-266 contribute to the ATP site; these read DAK, RF, and RK. Residue Asp-239 participates in L-methionine binding. Residue Lys-270 participates in L-methionine binding.

Belongs to the AdoMet synthase family. As to quaternary structure, homotetramer; dimer of dimers. Mg(2+) serves as cofactor. K(+) is required as a cofactor.

Its subcellular location is the cytoplasm. It catalyses the reaction L-methionine + ATP + H2O = S-adenosyl-L-methionine + phosphate + diphosphate. It functions in the pathway amino-acid biosynthesis; S-adenosyl-L-methionine biosynthesis; S-adenosyl-L-methionine from L-methionine: step 1/1. Its function is as follows. Catalyzes the formation of S-adenosylmethionine (AdoMet) from methionine and ATP. The overall synthetic reaction is composed of two sequential steps, AdoMet formation and the subsequent tripolyphosphate hydrolysis which occurs prior to release of AdoMet from the enzyme. The sequence is that of S-adenosylmethionine synthase from Buchnera aphidicola subsp. Acyrthosiphon pisum (strain 5A).